A 545-amino-acid polypeptide reads, in one-letter code: Glucans biosynthesis protein G (545 aa).

Positions 1-34 (MVSLLRCQSFKPSSSLICSLALSAAFALSSSAFA) are cleaved as a signal peptide. The segment at 38–60 (KPAENKPATPVVSPPKATAQPAN) is disordered.

The protein belongs to the OpgD/OpgG family.

It is found in the periplasm. It participates in glycan metabolism; osmoregulated periplasmic glucan (OPG) biosynthesis. Functionally, involved in the biosynthesis of osmoregulated periplasmic glucans (OPGs). This is Glucans biosynthesis protein G from Shewanella sp. (strain MR-7).